Here is a 303-residue protein sequence, read N- to C-terminus: Sulfate adenylyltransferase subunit 2 (303 aa).

This sequence belongs to the PAPS reductase family. CysD subfamily. As to quaternary structure, heterodimer composed of CysD, the smaller subunit, and CysN.

The catalysed reaction is sulfate + ATP + H(+) = adenosine 5'-phosphosulfate + diphosphate. It participates in sulfur metabolism; hydrogen sulfide biosynthesis; sulfite from sulfate: step 1/3. Its function is as follows. With CysN forms the ATP sulfurylase (ATPS) that catalyzes the adenylation of sulfate producing adenosine 5'-phosphosulfate (APS) and diphosphate, the first enzymatic step in sulfur assimilation pathway. APS synthesis involves the formation of a high-energy phosphoric-sulfuric acid anhydride bond driven by GTP hydrolysis by CysN coupled to ATP hydrolysis by CysD. The sequence is that of Sulfate adenylyltransferase subunit 2 from Sulfurimonas denitrificans (strain ATCC 33889 / DSM 1251) (Thiomicrospira denitrificans (strain ATCC 33889 / DSM 1251)).